Consider the following 493-residue polypeptide: Glutamyl-tRNA(Gln) amidotransferase subunit A (493 aa).

Catalysis depends on charge relay system residues Lys-79 and Ser-159. Ser-183 acts as the Acyl-ester intermediate in catalysis.

Belongs to the amidase family. GatA subfamily. As to quaternary structure, heterotrimer of A, B and C subunits.

The enzyme catalyses L-glutamyl-tRNA(Gln) + L-glutamine + ATP + H2O = L-glutaminyl-tRNA(Gln) + L-glutamate + ADP + phosphate + H(+). In terms of biological role, allows the formation of correctly charged Gln-tRNA(Gln) through the transamidation of misacylated Glu-tRNA(Gln) in organisms which lack glutaminyl-tRNA synthetase. The reaction takes place in the presence of glutamine and ATP through an activated gamma-phospho-Glu-tRNA(Gln). The polypeptide is Glutamyl-tRNA(Gln) amidotransferase subunit A (Rhizobium leguminosarum bv. trifolii (strain WSM2304)).